Reading from the N-terminus, the 336-residue chain is Calcium uniporter protein 3, mitochondrial (336 aa).

Residues 1–69 constitute a mitochondrion transit peptide; it reads MAMRKLLSKK…RFMHNSAMIR (69 aa). A run of 2 helical transmembrane segments spans residues 231-251 and 257-277; these read LWAGLGYLILQTAGFMRLTFW and VMEPICFYVTSVYFMAGYAFF. Positions 255–263 match the Selectivity filter motif; sequence WDVMEPICF. Position 259 (Glu259) interacts with Ca(2+).

It belongs to the MCU (TC 1.A.77) family.

It is found in the mitochondrion inner membrane. The catalysed reaction is Ca(2+)(in) = Ca(2+)(out). Its function is as follows. Mitochondrial inner membrane calcium uniporter that mediates calcium uptake into mitochondria. Constitutes a pore-forming and calcium-conducting subunit. Mitochondrial calcium homeostasis plays key roles in cellular physiology and regulates cell bioenergetics, cytoplasmic calcium signals and activation of cell death pathways. This chain is Calcium uniporter protein 3, mitochondrial, found in Arabidopsis thaliana (Mouse-ear cress).